The chain runs to 436 residues: Serine--tRNA ligase (436 aa).

242–244 (TAE) is an L-serine binding site. 273 to 275 (RSE) lines the ATP pocket. E296 serves as a coordination point for L-serine. 360-363 (EISS) is an ATP binding site. S395 is an L-serine binding site.

This sequence belongs to the class-II aminoacyl-tRNA synthetase family. Type-1 seryl-tRNA synthetase subfamily. As to quaternary structure, homodimer. The tRNA molecule binds across the dimer.

Its subcellular location is the cytoplasm. The enzyme catalyses tRNA(Ser) + L-serine + ATP = L-seryl-tRNA(Ser) + AMP + diphosphate + H(+). It carries out the reaction tRNA(Sec) + L-serine + ATP = L-seryl-tRNA(Sec) + AMP + diphosphate + H(+). The protein operates within aminoacyl-tRNA biosynthesis; selenocysteinyl-tRNA(Sec) biosynthesis; L-seryl-tRNA(Sec) from L-serine and tRNA(Sec): step 1/1. Catalyzes the attachment of serine to tRNA(Ser). Is also able to aminoacylate tRNA(Sec) with serine, to form the misacylated tRNA L-seryl-tRNA(Sec), which will be further converted into selenocysteinyl-tRNA(Sec). In Polynucleobacter necessarius subsp. necessarius (strain STIR1), this protein is Serine--tRNA ligase.